The primary structure comprises 218 residues: MGQKVNPIGIRLGIIKDWNSKWFAGKRYAEFLIQDIKLRNDLKKKLMAAAVSKILIERPANNAVVTILTARPGVIIGKKGGGIETLRKEISDNLGVPVHLNIEEVKKPELDATLVAEGIAQQLEQRVMFRRAMKRAVTSALKAGAKGIKICVSGRLGGAEIARSEWYREGRVPLHTFRADIDYGTAESKTTYGIIGVKVWIFKGEILPQKKRSTESAQ.

The 69-residue stretch at 38–106 folds into the KH type-2 domain; the sequence is LRNDLKKKLM…PVHLNIEEVK (69 aa).

This sequence belongs to the universal ribosomal protein uS3 family. Part of the 30S ribosomal subunit. Forms a tight complex with proteins S10 and S14.

Its function is as follows. Binds the lower part of the 30S subunit head. Binds mRNA in the 70S ribosome, positioning it for translation. This chain is Small ribosomal subunit protein uS3, found in Legionella pneumophila (strain Paris).